Consider the following 621-residue polypeptide: UvrABC system protein C (621 aa).

The 80-residue stretch at 13–92 folds into the GIY-YIG domain; it reads EKPGVYLMKN…IKKYRPRYNI (80 aa). The UVR domain maps to 204–239; it reads NEVINDLKIKMEKASSELKFEEAASFRDKLLAVEKI.

It belongs to the UvrC family. As to quaternary structure, interacts with UvrB in an incision complex.

The protein localises to the cytoplasm. The UvrABC repair system catalyzes the recognition and processing of DNA lesions. UvrC both incises the 5' and 3' sides of the lesion. The N-terminal half is responsible for the 3' incision and the C-terminal half is responsible for the 5' incision. This Clostridium novyi (strain NT) protein is UvrABC system protein C.